The sequence spans 315 residues: Olfactory receptor 3A10 (315 aa).

Residues 1-28 (MEPGAWGNRTAVTDFILLGLTGNVRLQP) lie on the Extracellular side of the membrane. An N-linked (GlcNAc...) asparagine glycan is attached at Asn-8. The chain crosses the membrane as a helical span at residues 29–49 (ILFVVFFFAYIVTVGGNLSIL). The Cytoplasmic portion of the chain corresponds to 50 to 68 (AAIFVEPKLHTPMYYFLGN). A helical transmembrane segment spans residues 69–89 (LSLLDIGCISVTVPPMLVCLL). Over 90-97 (AHECRVPY) the chain is Extracellular. Residues 98-118 (AACISQLFFFHLLAGVDCHLL) form a helical membrane-spanning segment. Cys-100 and Cys-192 are oxidised to a cystine. Topologically, residues 119–145 (TAMAYDRYLAICQPLTYSTRMSREVQG) are cytoplasmic. Residues 146–166 (TLVGICCTVSFINALTHTVAV) traverse the membrane as a helical segment. The Extracellular portion of the chain corresponds to 167-200 (SVLDFCGPNVVNHFYCDLPPLFQLSCSSIYLNGQ). The chain crosses the membrane as a helical span at residues 201 to 221 (LLFVGATFMGVVPMILISVSY). The Cytoplasmic portion of the chain corresponds to 222–239 (AHVAAAVLRIRSTEGRKK). The helical transmembrane segment at 240 to 260 (AFSTCGSHLTVVCIFYGTGFF) threads the bilayer. Over 261–274 (SYMRLGSVSASDKD) the chain is Extracellular. Residues 275 to 295 (KGIGILNTILSPMLNPLIYSL) traverse the membrane as a helical segment. Over 296–315 (RNPDVQGALKRVLTGKRYPV) the chain is Cytoplasmic.

The protein belongs to the G-protein coupled receptor 1 family.

It is found in the cell membrane. Functionally, odorant receptor. The chain is Olfactory receptor 3A10 from Mus musculus (Mouse).